Reading from the N-terminus, the 601-residue chain is Glutathione-regulated potassium-efflux system protein KefB (601 aa).

Transmembrane regions (helical) follow at residues 4-24 (SDFLLAGVLFLFAAVAAVPLA), 29-49 (IGAVLGYLLAGIAIGPWGLGF), 55-75 (EILHFSELGVVFLMFIIGLEL), 87-107 (IFGVGAAQVLLSAALLAGLLM), 115-135 (AAVVGGIGLAMSSTAMALQLM), 152-172 (VLLFQDLAVIPALALVPLLAG), 177-197 (HFDWMKIGMKVLAFVGMLIGG), 207-227 (FIAASGVREVFTAATLLLVLG), 230-250 (LFMDALGLSMALGTFIAGVLL), 268-288 (GLLLGLFFISVGMSLNLGVLY), 291-311 (LLWVVISVVVLVAVKILVLYL), 324-344 (MQFAGVLSQGGEFAFVLFSTA), and 356-376 (ALLLVTVTLSMMTTPLLMKLV). In terms of domain architecture, RCK N-terminal spans 400 to 519 (KPQVIVVGFG…AGVTQFSRET (120 aa)).

This sequence belongs to the monovalent cation:proton antiporter 2 (CPA2) transporter (TC 2.A.37) family. KefB subfamily. Interacts with the regulatory subunit KefG.

The protein resides in the cell inner membrane. Its function is as follows. Pore-forming subunit of a potassium efflux system that confers protection against electrophiles. Catalyzes K(+)/H(+) antiport. In Shigella sonnei (strain Ss046), this protein is Glutathione-regulated potassium-efflux system protein KefB.